A 292-amino-acid polypeptide reads, in one-letter code: NAD kinase (292 aa).

Residue Asp72 is the Proton acceptor of the active site. Residues 72–73 (DG), 146–147 (NE), His157, Arg174, Asp176, and 187–192 (TAYALS) contribute to the NAD(+) site.

Belongs to the NAD kinase family. A divalent metal cation is required as a cofactor.

The protein localises to the cytoplasm. It carries out the reaction NAD(+) + ATP = ADP + NADP(+) + H(+). Functionally, involved in the regulation of the intracellular balance of NAD and NADP, and is a key enzyme in the biosynthesis of NADP. Catalyzes specifically the phosphorylation on 2'-hydroxyl of the adenosine moiety of NAD to yield NADP. This chain is NAD kinase, found in Shewanella oneidensis (strain ATCC 700550 / JCM 31522 / CIP 106686 / LMG 19005 / NCIMB 14063 / MR-1).